The sequence spans 184 residues: Ribosome-recycling factor (184 aa).

This sequence belongs to the RRF family.

The protein resides in the cytoplasm. Its function is as follows. Responsible for the release of ribosomes from messenger RNA at the termination of protein biosynthesis. May increase the efficiency of translation by recycling ribosomes from one round of translation to another. The chain is Ribosome-recycling factor from Leptospira interrogans serogroup Icterohaemorrhagiae serovar copenhageni (strain Fiocruz L1-130).